We begin with the raw amino-acid sequence, 203 residues long: Small ribosomal subunit protein uS4 (203 aa).

In terms of domain architecture, S4 RNA-binding spans 93 to 156 (TRLDNLVFRL…QNLAIVNEAI (64 aa)).

Belongs to the universal ribosomal protein uS4 family. In terms of assembly, part of the 30S ribosomal subunit. Contacts protein S5. The interaction surface between S4 and S5 is involved in control of translational fidelity.

Its function is as follows. One of the primary rRNA binding proteins, it binds directly to 16S rRNA where it nucleates assembly of the body of the 30S subunit. With S5 and S12 plays an important role in translational accuracy. In Lacticaseibacillus casei (strain BL23) (Lactobacillus casei), this protein is Small ribosomal subunit protein uS4.